The sequence spans 1399 residues: DNA-directed RNA polymerase subunit beta' (1399 aa).

Positions 70, 72, 85, and 88 each coordinate Zn(2+). Mg(2+) contacts are provided by aspartate 460, aspartate 462, and aspartate 464. Positions 814, 888, 895, and 898 each coordinate Zn(2+).

The protein belongs to the RNA polymerase beta' chain family. In terms of assembly, the RNAP catalytic core consists of 2 alpha, 1 beta, 1 beta' and 1 omega subunit. When a sigma factor is associated with the core the holoenzyme is formed, which can initiate transcription. Requires Mg(2+) as cofactor. The cofactor is Zn(2+).

The enzyme catalyses RNA(n) + a ribonucleoside 5'-triphosphate = RNA(n+1) + diphosphate. DNA-dependent RNA polymerase catalyzes the transcription of DNA into RNA using the four ribonucleoside triphosphates as substrates. This chain is DNA-directed RNA polymerase subunit beta', found in Pseudomonas putida (strain GB-1).